Here is a 796-residue protein sequence, read N- to C-terminus: Pathogenesis-related homeodomain protein (796 aa).

Disordered stretches follow at residues 34–57 (KKGK…EELC) and 80–99 (VKKT…KVEV). Residues 81–90 (KKTRKRKSKR) show a composition bias toward basic residues. Residues 190–247 (HIFCAECNSREAFPDNDIILCDGTCNRAFHQKCLDPPLETESIPPGDQGWFCKFCDCK) form a PHD-type zinc finger. 3 disordered regions span residues 282-347 (SEAT…STGS), 393-422 (LQEQ…STLV), and 511-736 (NRKT…TEEE). The segment covering 292–303 (WPSDDSKDDDYD) has biased composition (acidic residues). The segment at residues 452-511 (GGRRRMFRLPRNAVEKLRQVFAETELPSKAVRDRLAKELSLDPEKVNKWFKNTRYMALRN) is a DNA-binding region (homeobox). Composition is skewed to polar residues over residues 538 to 547 (ENNTETNEVQ) and 560 to 569 (ATNQNILSPC). Over residues 570–580 (NNNQEEFQQEN) the composition is skewed to low complexity. Positions 581 to 600 (VSFPSPTDESQQYLEQNDSS) are enriched in polar residues. A run of 4 repeats spans residues 605-631 (PHEK…MMKE), 632-658 (PHEE…MIEE), 659-685 (PHEE…MMEE), and 686-712 (PHDE…MTEE). A 5 X 27 AA tandem repeats region spans residues 605–735 (PHEKQSSEIS…KETGRKMTEE (131 aa)). Basic and acidic residues-rich tracts occupy residues 624–636 (TESK…HEEL), 645–690 (AAEE…HDEL), and 700–733 (VEEK…RKMT). The 5; truncated repeat unit spans residues 713 to 735 (SHEELSNEMSLEEKETGRKMTEE). The segment at 738-759 (LEAVMEMLCRTENKLLDVTQRL) is leucine-zipper.

Belongs to the PHD-associated homeobox family.

Its subcellular location is the nucleus. Specifically binds to the fungal elicitor-responsive DNA element, 5'-CTAATTGTTTA-3', of the gene PR2 promoter. The polypeptide is Pathogenesis-related homeodomain protein (PRH) (Arabidopsis thaliana (Mouse-ear cress)).